Reading from the N-terminus, the 552-residue chain is Putative transport protein YPN_3727 (552 aa).

The next 6 helical transmembrane spans lie at 1-21, 26-46, 65-85, 96-116, 119-139, and 158-178; these read MSAI…GLWI, IYGV…VGHF, FGLI…FFSS, FAIL…KLFA, LPII…LGAA, and MGYA…MWLI. 2 RCK C-terminal domains span residues 192–276 and 279–361; these read AFDS…VVGE and DVTL…IVGN. A run of 6 helical transmembrane segments spans residues 371 to 391, 393 to 413, 439 to 459, 464 to 484, 493 to 513, and 530 to 550; these read MLPV…PLFV, GFPA…ALIL, IVLF…NTLV, LAWI…VGIL, YLTL…LAFA, and VYPL…VLFW.

Belongs to the AAE transporter (TC 2.A.81) family. YidE subfamily.

Its subcellular location is the cell membrane. This Yersinia pestis bv. Antiqua (strain Nepal516) protein is Putative transport protein YPN_3727.